The chain runs to 87 residues: UPF0729 protein C18orf32 homolog (87 aa).

This sequence belongs to the UPF0729 family.

This is UPF0729 protein C18orf32 homolog from Esox lucius (Northern pike).